The sequence spans 380 residues: Cytochrome b (380 aa).

A run of 4 helical transmembrane segments spans residues 33-53 (FGSL…FLAM), 77-98 (WLIR…FLHV), 113-133 (WNMG…GYVL), and 178-198 (FFAF…VHLL). Positions 83 and 97 each coordinate heme. Positions 182 and 196 each coordinate heme. His201 contributes to the a ubiquinone binding site. The next 4 helical transmembrane spans lie at 226-246 (VKDF…TLFF), 288-308 (LGGV…PLLH), 320-340 (ITQT…WIGG), and 347-367 (FIII…IFMP).

It belongs to the cytochrome b family. As to quaternary structure, the cytochrome bc1 complex contains 11 subunits: 3 respiratory subunits (MT-CYB, CYC1 and UQCRFS1), 2 core proteins (UQCRC1 and UQCRC2) and 6 low-molecular weight proteins (UQCRH/QCR6, UQCRB/QCR7, UQCRQ/QCR8, UQCR10/QCR9, UQCR11/QCR10 and a cleavage product of UQCRFS1). This cytochrome bc1 complex then forms a dimer. Requires heme as cofactor.

The protein localises to the mitochondrion inner membrane. In terms of biological role, component of the ubiquinol-cytochrome c reductase complex (complex III or cytochrome b-c1 complex) that is part of the mitochondrial respiratory chain. The b-c1 complex mediates electron transfer from ubiquinol to cytochrome c. Contributes to the generation of a proton gradient across the mitochondrial membrane that is then used for ATP synthesis. This is Cytochrome b (MT-CYB) from Microtus arvalis (Common vole).